A 325-amino-acid chain; its full sequence is tRNA dimethylallyltransferase (325 aa).

12-19 is a binding site for ATP; the sequence is GPTASGKT. 14-19 is a substrate binding site; the sequence is TASGKT. Interaction with substrate tRNA regions lie at residues 37 to 40, 161 to 165, and 244 to 249; these read DSAL, QRIHR, and RCVGYR.

This sequence belongs to the IPP transferase family. Monomer. Mg(2+) is required as a cofactor.

The catalysed reaction is adenosine(37) in tRNA + dimethylallyl diphosphate = N(6)-dimethylallyladenosine(37) in tRNA + diphosphate. Functionally, catalyzes the transfer of a dimethylallyl group onto the adenine at position 37 in tRNAs that read codons beginning with uridine, leading to the formation of N6-(dimethylallyl)adenosine (i(6)A). The sequence is that of tRNA dimethylallyltransferase from Chromobacterium violaceum (strain ATCC 12472 / DSM 30191 / JCM 1249 / CCUG 213 / NBRC 12614 / NCIMB 9131 / NCTC 9757 / MK).